Consider the following 193-residue polypeptide: NADH-quinone oxidoreductase subunit B (193 aa).

Positions 72, 73, 137, and 167 each coordinate [4Fe-4S] cluster.

It belongs to the complex I 20 kDa subunit family. As to quaternary structure, NDH-1 is composed of 14 different subunits. Subunits NuoB, C, D, E, F, and G constitute the peripheral sector of the complex. The cofactor is [4Fe-4S] cluster.

Its subcellular location is the cell inner membrane. It catalyses the reaction a quinone + NADH + 5 H(+)(in) = a quinol + NAD(+) + 4 H(+)(out). NDH-1 shuttles electrons from NADH, via FMN and iron-sulfur (Fe-S) centers, to quinones in the respiratory chain. The immediate electron acceptor for the enzyme in this species is believed to be ubiquinone. Couples the redox reaction to proton translocation (for every two electrons transferred, four hydrogen ions are translocated across the cytoplasmic membrane), and thus conserves the redox energy in a proton gradient. This chain is NADH-quinone oxidoreductase subunit B, found in Bartonella quintana (strain Toulouse) (Rochalimaea quintana).